A 247-amino-acid chain; its full sequence is Synaptogyrin homolog 1 (247 aa).

The MARVEL domain maps to 21–175 (FFKKPTVLFR…AAFFAWRRYE (155 aa)). 4 helical membrane-spanning segments follow: residues 25–45 (PTVLFRCAALLFGLILWYSVS), 69–89 (CSFATAVGFFAVCGAIVLIVL), 105–125 (AVLADLVVSAIFTAIFLIGFF), and 151–171 (FGILSALLSFLAWGGAAFFAW). The tract at residues 206 to 247 (DSTGIGHVGAPPPQSSYQSGAAPQTMQQPPSNPYTQSEGYGY) is disordered. Positions 220–247 (SSYQSGAAPQTMQQPPSNPYTQSEGYGY) are enriched in polar residues.

It belongs to the synaptogyrin family. As to expression, expressed in a wide variety of neurons and is expressed weakly in the non-neuronal distal tip cells. A punctate pattern was observed in the ventral and dorsal nerve cords and the nerve ring. Weak expression is seen in neuronal cell bodies and commissures.

It localises to the membrane. The chain is Synaptogyrin homolog 1 (sng-1) from Caenorhabditis elegans.